A 459-amino-acid polypeptide reads, in one-letter code: Elongation factor 1-alpha (459 aa).

Glycine 2 carries the n,N,N-trimethylglycine modification. Lysine 3 carries the N6,N6-dimethyllysine; alternate modification. Residue lysine 3 is modified to N6-methyllysine; alternate. Residues 5-239 (KSHINVVVIG…DAIDPPSRPT (235 aa)) form the tr-type G domain. The segment at 14 to 21 (GHVDSGKS) is G1. GTP is bound at residue 14–21 (GHVDSGKS). Lysine 30 is subject to N6-methyllysine. The segment at 70–74 (GITID) is G2. At lysine 79 the chain carries N6,N6,N6-trimethyllysine. The interval 91–94 (DAPG) is G3. GTP is bound by residues 91 to 95 (DAPGH) and 153 to 156 (NKMD). A G4 region spans residues 153-156 (NKMD). Residues 192-194 (SGF) are G5. Position 315 is an N6,N6-dimethyllysine; alternate (lysine 315). Lysine 315 is modified (N6-methyllysine; alternate). An N6-methyllysine modification is found at lysine 389.

The protein belongs to the TRAFAC class translation factor GTPase superfamily. Classic translation factor GTPase family. EF-Tu/EF-1A subfamily.

It localises to the cytoplasm. Its function is as follows. This protein promotes the GTP-dependent binding of aminoacyl-tRNA to the A-site of ribosomes during protein biosynthesis. The chain is Elongation factor 1-alpha (TEF1) from Aureobasidium pullulans (Black yeast).